A 458-amino-acid polypeptide reads, in one-letter code: DNA repair protein RadA (458 aa).

The segment at 10 to 27 (CQSCGYESPKWMGKCPGC) adopts a C4-type zinc-finger fold. 98-105 (GDPGIGKS) serves as a coordination point for ATP. The short motif at 255-259 (KNRFG) is the RadA KNRFG motif element. The interval 354–458 (DAYLKVAGGV…AEALRTSLGG (105 aa)) is lon-protease-like.

The protein belongs to the RecA family. RadA subfamily. In terms of assembly, interacts with DisA.

Functionally, DNA-dependent ATPase involved in processing of recombination intermediates, plays a role in repairing DNA breaks. Stimulates the branch migration of RecA-mediated strand transfer reactions, allowing the 3' invading strand to extend heteroduplex DNA faster. Binds ssDNA in the presence of ADP but not other nucleotides, has ATPase activity that is stimulated by ssDNA and various branched DNA structures, but inhibited by SSB. Does not have RecA's homology-searching function. In terms of biological role, plays a role in DNA repair. Might stabilize or process Holliday junction intermediates. May work with DisA following methyl methanesulfonate (MMS) but not H(2)O(2) damage; DisA is a DNA integrity scanning protein with c-di-AMP synthase activity. This Bacillus subtilis (strain 168) protein is DNA repair protein RadA.